A 425-amino-acid polypeptide reads, in one-letter code: MGSLSSPTDLTPYQVLSKYKKFPSPDEEFWWDHAASTLADLIKWTKATPAQEYEFLQFFYEHVIPNFSGYRPYDVPGRAWNTGITPSGLPLEYSVNWRNIDANAMVRVGVEPISQFAGTARDPYSHYKIWDTLNQLSQVKALKSFDLELWRHFSSALCTSREEEALLDQTRTLPESFSIAKMQHSMGFDFCDDEVVVKIYLIPNMKARASGTPLAELLTGSIHAIYRDTIDRETLATVINYLDSTSNFNDATWFSFDCIPRSQSRIKLYGSDFRTTWSRAEDLWTVGGRYTDAVTMKGLAYLKELWDLLPIQDFETLPEQAVQNPPMLWAYEIRPGDKIPSPRIYIPGHCLNDKKVADGLSAFFKRVGWSDLGDQYTDRLFSMFPKQDLKDSTALHTWIAFSYTEKSGVYMNCYYLASASFPFKL.

L-tryptophan contacts are provided by residues 83–84 (GI) and glutamate 92. Substrate contacts are provided by arginine 107, lysine 198, tyrosine 200, arginine 265, lysine 267, tyrosine 269, tyrosine 345, tyrosine 410, and tyrosine 414.

It belongs to the tryptophan dimethylallyltransferase family. In terms of assembly, homodimer.

It functions in the pathway secondary metabolite biosynthesis. Aromatic prenyl transferase; part of the gene cluster that mediates the biosynthesis of the indole diterpenes penitrems. The geranylgeranyl diphosphate (GGPP) synthase ptmG catalyzes the first step in penitrem biosynthesis via conversion of farnesyl pyrophosphate and isopentyl pyrophosphate into geranylgeranyl pyrophosphate (GGPP). Condensation of indole-3-glycerol phosphate with GGPP by the prenyl transferase ptmC then forms 3-geranylgeranylindole (3-GGI). Epoxidation by the FAD-dependent monooxygenase ptmM leads to a epoxidized-GGI that is substrate of the terpene cyclase ptmB for cyclization to yield paspaline. Paspaline is subsequently converted to 13-desoxypaxilline by the cytochrome P450 monooxygenase ptmP, the latter being then converted to paxilline by the cytochrome P450 monooxygenase ptmQ. Paxilline is converted to beta-paxitriol via C-10 ketoreduction by the short-chain dehydrogenase ptmH which can be monoprenylated at the C-20 by the indole diterpene prenyltransferase ptmD. A two-step elimination (acetylation and elimination) process performed by the O-acetyltransferase ptmV and ptmI leads to the production of the prenylated form of penijanthine. The FAD-linked oxidoreductase ptmO then converts the prenylated form of penijanthine into PC-M5 which is in turn transformed into PC-M4 by the aromatic dimethylallyltransferase ptmE. Five sequential oxidative transformations performed by the cytochrome P450 monooxygenases ptmK, ptmU, ptmL, ptmN and ptmJ yield the various penitrem compounds. PtmK, ptmU and ptmM are involved in the formation of the key bicyclic ring of penitrem C via the formation of the intermediates secopenitrem D and penitrem D. PtmL catalyzes the epoxidation of penitrem D and C to yield penitrem B and F, respectively. PtmJ catalyzes the last benzylic hydroxylation to convert penitrem B to prenitrem E and penitrem F to penitrem A. The chain is Aromatic prenyl transferase ptmE from Penicillium ochrochloron.